We begin with the raw amino-acid sequence, 164 residues long: CB1 cannabinoid receptor-interacting protein 1 (164 aa).

Belongs to the CNRIP family. In terms of assembly, interacts with the cannabinoid receptor CNR1 (via C-terminus). Does not interact with cannabinoid receptor CNR2.

Functionally, suppresses cannabinoid receptor CNR1-mediated tonic inhibition of voltage-gated calcium channels. Its function is as follows. Does not suppress cannabinoid receptor CNR1-mediated tonic inhibition of voltage-gated calcium channels. The sequence is that of CB1 cannabinoid receptor-interacting protein 1 (CNRIP1) from Homo sapiens (Human).